A 416-amino-acid polypeptide reads, in one-letter code: MGLKRVVVIGLGLSGKSIARFLARKGVYVLGVDSSIQALQHCPYIHEKLLETDEFPTQVDYVVRSPGISKDHPWVKAARAAQISVVTDIQLAFQTKEFIEQKSFGITGTVGKTTTILFLEYLLRKAGIPAFAMGNVGVPILDGMQNSGVRLVEMSSFQLADQETSYPVLSGGMILNISDNHLDYHGSFLEYCQSKQNLSLCMRNPEDLWVGDQRFCGRSYWEEVQKYMRLLDKESALKPLYLHDKYNYCCAYLLAQAEFPIAKSLFIEAVATFKKPSHRMEYLGEKCGVHYINDSKATTVRATEKALLSIGSRAIVILGGRNKGYSFVSLLPSLRRFAKSVVAMGECAQEIAQDLDGFPVTVVRNLHEALLCAEEQAIPGDVVLLSPACASFDQFRSYEERGAIFKQLVGMEEVLL.

108 to 114 serves as a coordination point for ATP; the sequence is GTVGKTT.

Belongs to the MurCDEF family.

It localises to the cytoplasm. It carries out the reaction UDP-N-acetyl-alpha-D-muramoyl-L-alanine + D-glutamate + ATP = UDP-N-acetyl-alpha-D-muramoyl-L-alanyl-D-glutamate + ADP + phosphate + H(+). It participates in cell wall biogenesis; peptidoglycan biosynthesis. In terms of biological role, cell wall formation. Catalyzes the addition of glutamate to the nucleotide precursor UDP-N-acetylmuramoyl-L-alanine (UMA). The sequence is that of UDP-N-acetylmuramoylalanine--D-glutamate ligase from Chlamydia muridarum (strain MoPn / Nigg).